The following is a 246-amino-acid chain: 1-(5-phosphoribosyl)-5-[(5-phosphoribosylamino)methylideneamino] imidazole-4-carboxamide isomerase (246 aa).

The Proton acceptor role is filled by Asp8. Catalysis depends on Asp130, which acts as the Proton donor.

The protein belongs to the HisA/HisF family.

It is found in the cytoplasm. The enzyme catalyses 1-(5-phospho-beta-D-ribosyl)-5-[(5-phospho-beta-D-ribosylamino)methylideneamino]imidazole-4-carboxamide = 5-[(5-phospho-1-deoxy-D-ribulos-1-ylimino)methylamino]-1-(5-phospho-beta-D-ribosyl)imidazole-4-carboxamide. It participates in amino-acid biosynthesis; L-histidine biosynthesis; L-histidine from 5-phospho-alpha-D-ribose 1-diphosphate: step 4/9. In Shigella dysenteriae serotype 1 (strain Sd197), this protein is 1-(5-phosphoribosyl)-5-[(5-phosphoribosylamino)methylideneamino] imidazole-4-carboxamide isomerase.